The chain runs to 483 residues: MGDATATEVFPVMDSIAVAMGDVESQLRVFHNVSRFLPTDDANQVFWWRTTGRHFAIMMHEARYSEARQVELLLFYRFVIAPRLGPRPTSATPWFHSRVAPGIGDGSPIGYSWRWGTGPDTKPLIRHYIEAIGPLTGTTADPLNEFAAKEMLYQLGQLVPGVELPLAWKFAAHIRPSLTDEPTRAVAGSSILIGLQCAPESAGIEVMAGLMTRSPAQVPELLHSIFPRAMRDAYGPDASLDGLNMVRDFVCHDPQGQYLTILGTTAIDCCAAASSRFKVYVTTTNTSFAHLAAVMTLGGRKPEAPESLTQLQELWYALKGLDPEFPVTAEPLSSVCGAANGTASGNPNANVSGVTFYFDIHPKYPFPHIKLQVDISKHTISDLGAINAVTEFLARRGQAADAQAYLNVVRAMVPDEELRTRRGLQAFFAFAFKNGAVDITSYFLPQIYRRYAEVQAELEPRKDCQGRSELSSKLQRRSRFDSY.

This sequence belongs to the tryptophan dimethylallyltransferase family.

It participates in secondary metabolite biosynthesis; terpenoid biosynthesis. Prenyltransferase; part of the gene cluster that mediates the biosynthesis of viridicatumtoxin, a tetracycline-like fungal meroterpenoid with a unique, fused spirobicyclic ring system. The first step of the pathway is the production of the malonamoyl-CoA starter unit for the polyketide synthase vrtA. The aldolase vrtJ may be involved in the synthesis of the malonamate substrate for malonamoyl-CoA synthetase vrtB. The polyketide synthase vrtA then may utilize the malonamoyl-CoA starter unit, followed by sequential condensation of eight malonyl-CoA units to form the polyketide backbone. The cyclization of the last ring could be mediated by the lactamase-like protein vrtG. The proposed post-PKS tailoring steps are a hydroxylation at C5 catalyzed the cytochrome P450 monooxygenase vrtE, a hydroxylation at C12a catalyzed by VrtH and/or VrtI, and an O-methylation by the O-methyltransferase vrtF. VrtC is then proposed to catalyze the transfer of a geranyl group synthesized by vrtD to the aromatic C ring of the tetracyclic polyketide intermediate of viridicatumtoxin to yield previridicatumtoxin. Finally, the cytochrome P450 monooxygenase vrtK catalyzes the spirocyclization of the geranyl moiety of previridicatumtoxin to afford viridicatumtoxin. This is Prenyltransferase vrtC from Penicillium aethiopicum.